The primary structure comprises 382 residues: Glucose-1-phosphate adenylyltransferase (382 aa).

Residues Y100, G165, 180–181 (EK), and S191 contribute to the alpha-D-glucose 1-phosphate site.

The protein belongs to the bacterial/plant glucose-1-phosphate adenylyltransferase family. Homotetramer.

The catalysed reaction is alpha-D-glucose 1-phosphate + ATP + H(+) = ADP-alpha-D-glucose + diphosphate. The protein operates within glycan biosynthesis; glycogen biosynthesis. Its function is as follows. Involved in the biosynthesis of ADP-glucose, a building block required for the elongation reactions to produce glycogen. Catalyzes the reaction between ATP and alpha-D-glucose 1-phosphate (G1P) to produce pyrophosphate and ADP-Glc. The sequence is that of Glucose-1-phosphate adenylyltransferase from Clostridium novyi (strain NT).